The chain runs to 368 residues: Glutaminyl-peptide cyclotransferase (368 aa).

The N-terminal stretch at 1–23 (MAGERRDSKAAAFFCLAWALCLA) is a signal peptide. Residue asparagine 53 is glycosylated (N-linked (GlcNAc...) asparagine). The cysteines at positions 143 and 169 are disulfide-linked. Aspartate 164 serves as a coordination point for Zn(2+). The active-site Proton acceptor is glutamate 207. Glutamate 208 contacts Zn(2+). The active-site Proton acceptor is the aspartate 254. Residue asparagine 292 is glycosylated (N-linked (GlcNAc...) asparagine). Residue histidine 336 participates in Zn(2+) binding. The N-linked (GlcNAc...) asparagine glycan is linked to asparagine 352.

Belongs to the glutaminyl-peptide cyclotransferase family. Expressed by the venom gland.

Its subcellular location is the secreted. It catalyses the reaction N-terminal L-glutaminyl-[peptide] = N-terminal 5-oxo-L-prolyl-[peptide] + NH4(+). Its function is as follows. Responsible for the biosynthesis of pyroglutamyl peptides. Has a bias against acidic and tryptophan residues adjacent to the N-terminal glutaminyl residue and a lack of importance of chain length after the second residue. Also catalyzes N-terminal pyroglutamate formation. The polypeptide is Glutaminyl-peptide cyclotransferase (QPCT) (Boiga dendrophila (Mangrove snake)).